We begin with the raw amino-acid sequence, 277 residues long: Outer plastidial membrane protein porin (277 aa).

It belongs to the eukaryotic mitochondrial porin (TC 1.B.8.1) family.

Its subcellular location is the plastid outer membrane. In terms of biological role, forms a channel through the cell membrane that allows diffusion of small hydrophilic molecules. The channel adopts an open conformation at low or zero membrane potential and a closed conformation at potentials above 30-40 mV. The open state has a weak anion selectivity whereas the closed state is cation-selective. This is Outer plastidial membrane protein porin (POR1) from Zea mays (Maize).